Consider the following 186-residue polypeptide: Ribosome-recycling factor (186 aa).

This sequence belongs to the RRF family.

The protein localises to the cytoplasm. In terms of biological role, responsible for the release of ribosomes from messenger RNA at the termination of protein biosynthesis. May increase the efficiency of translation by recycling ribosomes from one round of translation to another. This Polynucleobacter asymbioticus (strain DSM 18221 / CIP 109841 / QLW-P1DMWA-1) (Polynucleobacter necessarius subsp. asymbioticus) protein is Ribosome-recycling factor.